The following is a 286-amino-acid chain: Elongation factor Ts (286 aa).

Positions 82 to 85 (TDFV) are involved in Mg(2+) ion dislocation from EF-Tu.

It belongs to the EF-Ts family.

Its subcellular location is the cytoplasm. Its function is as follows. Associates with the EF-Tu.GDP complex and induces the exchange of GDP to GTP. It remains bound to the aminoacyl-tRNA.EF-Tu.GTP complex up to the GTP hydrolysis stage on the ribosome. The sequence is that of Elongation factor Ts from Hahella chejuensis (strain KCTC 2396).